Consider the following 325-residue polypeptide: D site-binding protein (325 aa).

3 disordered regions span residues 1–98 (MARP…AGPS), 124–203 (LEHG…EVLM), and 230–256 (FSEE…QKDE). A compositionally biased stretch (gly residues) spans 17-28 (GPAGAPPGGGAL). Residues 71-80 (AGPADAPSGA) are compositionally biased toward low complexity. The residue at position 86 (Ser86) is a Phosphoserine. The span at 88–98 (RGRSGPVAGPS) shows a compositional bias: low complexity. The span at 129–153 (PPSPPPPGGLSPAPSPARTPAPSPG) shows a compositional bias: pro residues. Positions 154–171 (PGSCSSSSPRSSPGHAPA) are enriched in low complexity. The 64-residue stretch at 255–318 (DEKYWSRRYK…SHYRAVLSRY (64 aa)) folds into the bZIP domain. The interval 257 to 279 (KYWSRRYKNNEAAKRSRDARRLK) is basic motif. The segment at 283-297 (ISVRAAFLEKENALL) is leucine-zipper.

The protein belongs to the bZIP family. PAR subfamily. As to quaternary structure, binds DNA as a homodimer or a heterodimer. Can form a heterodimer with TEF. Expressed in the suprachiasmatic nuclei (SCN) and in most peripheral tissues, with a strong circadian rhythmicity.

It localises to the nucleus. This transcriptional activator recognizes and binds to the sequence 5'-RTTAYGTAAY-3' found in the promoter of genes such as albumin, CYP2A4 and CYP2A5. It is not essential for circadian rhythm generation, but modulates important clock output genes. May be a direct target for regulation by the circadian pacemaker component clock. May affect circadian period and sleep regulation. The protein is D site-binding protein (Dbp) of Mus musculus (Mouse).